A 343-amino-acid chain; its full sequence is Aspartate carbamoyltransferase catalytic subunit (343 aa).

Positions Met-1–Ala-14 are enriched in polar residues. The tract at residues Met-1–Arg-20 is disordered. 2 residues coordinate carbamoyl phosphate: Arg-91 and Thr-92. Lys-119 contributes to the L-aspartate binding site. The carbamoyl phosphate site is built by Arg-141, His-171, and Gln-174. Residues Arg-204 and Arg-259 each contribute to the L-aspartate site. Residues Gly-300 and Pro-301 each contribute to the carbamoyl phosphate site.

It belongs to the aspartate/ornithine carbamoyltransferase superfamily. ATCase family. As to quaternary structure, heterododecamer (2C3:3R2) of six catalytic PyrB chains organized as two trimers (C3), and six regulatory PyrI chains organized as three dimers (R2).

It catalyses the reaction carbamoyl phosphate + L-aspartate = N-carbamoyl-L-aspartate + phosphate + H(+). It functions in the pathway pyrimidine metabolism; UMP biosynthesis via de novo pathway; (S)-dihydroorotate from bicarbonate: step 2/3. Catalyzes the condensation of carbamoyl phosphate and aspartate to form carbamoyl aspartate and inorganic phosphate, the committed step in the de novo pyrimidine nucleotide biosynthesis pathway. In Burkholderia lata (strain ATCC 17760 / DSM 23089 / LMG 22485 / NCIMB 9086 / R18194 / 383), this protein is Aspartate carbamoyltransferase catalytic subunit.